A 318-amino-acid polypeptide reads, in one-letter code: Replication factor C small subunit (318 aa).

43-50 (GSVGTGKT) lines the ATP pocket.

This sequence belongs to the activator 1 small subunits family. RfcS subfamily. In terms of assembly, heteromultimer composed of small subunits (RfcS) and large subunits (RfcL).

Its function is as follows. Part of the RFC clamp loader complex which loads the PCNA sliding clamp onto DNA. This is Replication factor C small subunit from Thermoplasma acidophilum (strain ATCC 25905 / DSM 1728 / JCM 9062 / NBRC 15155 / AMRC-C165).